A 324-amino-acid polypeptide reads, in one-letter code: NADH-quinone oxidoreductase subunit H (324 aa).

A run of 8 helical transmembrane segments spans residues 11 to 31 (ILIT…CGAF), 81 to 101 (VIFT…FAIV), 114 to 134 (IGIL…LFAG), 154 to 174 (VSYE…AGSF), 186 to 206 (LWNV…GVAV), 237 to 257 (FFVG…TLFF), 264 to 284 (ILPP…MFIL), and 304 to 324 (VCLP…LYNA).

It belongs to the complex I subunit 1 family. As to quaternary structure, NDH-1 is composed of 13 different subunits. Subunits NuoA, H, J, K, L, M, N constitute the membrane sector of the complex.

The protein localises to the cell inner membrane. It carries out the reaction a quinone + NADH + 5 H(+)(in) = a quinol + NAD(+) + 4 H(+)(out). NDH-1 shuttles electrons from NADH, via FMN and iron-sulfur (Fe-S) centers, to quinones in the respiratory chain. The immediate electron acceptor for the enzyme in this species is believed to be ubiquinone. Couples the redox reaction to proton translocation (for every two electrons transferred, four hydrogen ions are translocated across the cytoplasmic membrane), and thus conserves the redox energy in a proton gradient. This subunit may bind ubiquinone. This Pectobacterium carotovorum subsp. carotovorum (strain PC1) protein is NADH-quinone oxidoreductase subunit H.